Consider the following 611-residue polypeptide: Zinc metalloproteinase nas-31 (611 aa).

An N-terminal signal peptide occupies residues 1-17 (MILQLLFYSLFTHLAVS). Residues 18–158 (QIDVNQALNQ…TVSTASRARR (141 aa)) constitute a propeptide that is removed on maturation. N-linked (GlcNAc...) asparagine glycosylation is found at Asn-53 and Asn-67. Positions 82–95 (NAGTNQENGATEQQ) are enriched in polar residues. A disordered region spans residues 82 to 103 (NAGTNQENGATEQQKPLREKPR). The Peptidase M12A domain maps to 159–354 (QAYRDRYYPS…SMMNEHYKCK (196 aa)). N-linked (GlcNAc...) asparagine glycosylation occurs at Asn-200. Disulfide bonds link Cys-203–Cys-353, Cys-224–Cys-243, Cys-357–Cys-376, Cys-379–Cys-390, Cys-397–Cys-428, Cys-455–Cys-476, Cys-532–Cys-564, Cys-539–Cys-557, and Cys-548–Cys-561. His-251 provides a ligand contact to Zn(2+). Residue Glu-252 is part of the active site. 2 residues coordinate Zn(2+): His-255 and His-261. An EGF-like domain is found at 340–396 (GFYDISMMNEHYKCKELCPAASSAQCKNGGFPSPRNCAICICPSGYGGILCDQRPPG). In terms of domain architecture, CUB spans 397 to 516 (CGDSVTATTT…LEYRAVTPSV (120 aa)). The N-linked (GlcNAc...) asparagine glycan is linked to Asn-424. The ShKT domain occupies 532–564 (CQDLHPNCDFYKFFGMCRSKKIRSNCKFTCHDC).

Requires Zn(2+) as cofactor. In terms of tissue distribution, expressed in excretory cell and in amphid and phasmid sheath glia.

The protein localises to the secreted. Its function is as follows. Metalloprotease. The polypeptide is Zinc metalloproteinase nas-31 (nas-31) (Caenorhabditis elegans).